Consider the following 133-residue polypeptide: Membrane protein FAM174B (133 aa).

A signal peptide spans 1–19; that stretch reads MWLYTFAVALIVIAQEING. Over 20–67 the chain is Extracellular; the sequence is EPHTRPSSATPLNATLPPQEEGSAQNTTDAAVGSRLSTILRDLPTIKN. Residues 22–47 form a disordered region; it reads HTRPSSATPLNATLPPQEEGSAQNTT. 3 N-linked (GlcNAc...) asparagine glycosylation sites follow: Asn32, Asn45, and Asn67. The chain crosses the membrane as a helical span at residues 68–88; it reads ISIFICVLTTLLITCLVIKIC. At 89-133 the chain is on the cytoplasmic side; the sequence is RSARKIRKTRKYDIITTPAERVEMAPLNEENDEEDDSTLFDVKYR. The disordered stretch occupies residues 113 to 133; sequence APLNEENDEEDDSTLFDVKYR. Residues 117-126 show a composition bias toward acidic residues; the sequence is EENDEEDDST.

Belongs to the FAM174 family.

Its subcellular location is the cell membrane. The protein resides in the golgi apparatus. Functionally, essential for Golgi structural integrity. In Danio rerio (Zebrafish), this protein is Membrane protein FAM174B (Fam174b).